The primary structure comprises 239 residues: Exosome complex component Rrp41 (239 aa).

A disordered region spans residues 1-21 (MEERPERLISEDGLRLDGRKP).

The protein belongs to the RNase PH family. Rrp41 subfamily. In terms of assembly, component of the archaeal exosome complex. Forms a hexameric ring-like arrangement composed of 3 Rrp41-Rrp42 heterodimers. The hexameric ring associates with a trimer of Rrp4 and/or Csl4 subunits.

Its subcellular location is the cytoplasm. In terms of biological role, catalytic component of the exosome, which is a complex involved in RNA degradation. Has 3'-&gt;5' exoribonuclease activity. Can also synthesize heteromeric RNA-tails. The sequence is that of Exosome complex component Rrp41 from Methanopyrus kandleri (strain AV19 / DSM 6324 / JCM 9639 / NBRC 100938).